A 290-amino-acid chain; its full sequence is Elongation factor Ts (290 aa).

The segment at 83-86 (TDFV) is involved in Mg(2+) ion dislocation from EF-Tu.

This sequence belongs to the EF-Ts family.

The protein localises to the cytoplasm. Associates with the EF-Tu.GDP complex and induces the exchange of GDP to GTP. It remains bound to the aminoacyl-tRNA.EF-Tu.GTP complex up to the GTP hydrolysis stage on the ribosome. This Aquifex aeolicus (strain VF5) protein is Elongation factor Ts (tsf).